A 165-amino-acid polypeptide reads, in one-letter code: 3-isopropylmalate dehydratase small subunit 2 (165 aa).

It belongs to the LeuD family. LeuD type 2 subfamily. Heterodimer of LeuC and LeuD.

The enzyme catalyses (2R,3S)-3-isopropylmalate = (2S)-2-isopropylmalate. Its pathway is amino-acid biosynthesis; L-leucine biosynthesis; L-leucine from 3-methyl-2-oxobutanoate: step 2/4. In terms of biological role, catalyzes the isomerization between 2-isopropylmalate and 3-isopropylmalate, via the formation of 2-isopropylmaleate. This chain is 3-isopropylmalate dehydratase small subunit 2 (leuD2), found in Archaeoglobus fulgidus (strain ATCC 49558 / DSM 4304 / JCM 9628 / NBRC 100126 / VC-16).